Here is a 29-residue protein sequence, read N- to C-terminus: Cytochrome b6-f complex subunit 8 (29 aa).

The helical transmembrane segment at 3–23 threads the bilayer; it reads IVSIGWAALMVVFTFSLSLVV.

This sequence belongs to the PetN family. In terms of assembly, the 4 large subunits of the cytochrome b6-f complex are cytochrome b6, subunit IV (17 kDa polypeptide, PetD), cytochrome f and the Rieske protein, while the 4 small subunits are PetG, PetL, PetM and PetN. The complex functions as a dimer.

The protein resides in the plastid. It is found in the chloroplast thylakoid membrane. Its function is as follows. Component of the cytochrome b6-f complex, which mediates electron transfer between photosystem II (PSII) and photosystem I (PSI), cyclic electron flow around PSI, and state transitions. This is Cytochrome b6-f complex subunit 8 from Zygnema circumcarinatum (Green alga).